We begin with the raw amino-acid sequence, 363 residues long: Phosphoserine aminotransferase (363 aa).

Arg-42 is a binding site for L-glutamate. Residues 76–77, Trp-102, Thr-156, Asp-175, and Gln-198 contribute to the pyridoxal 5'-phosphate site; that span reads GR. Lys-199 bears the N6-(pyridoxal phosphate)lysine mark. Residue 240–241 participates in pyridoxal 5'-phosphate binding; it reads NT.

It belongs to the class-V pyridoxal-phosphate-dependent aminotransferase family. SerC subfamily. As to quaternary structure, homodimer. The cofactor is pyridoxal 5'-phosphate.

It localises to the cytoplasm. It carries out the reaction O-phospho-L-serine + 2-oxoglutarate = 3-phosphooxypyruvate + L-glutamate. The catalysed reaction is 4-(phosphooxy)-L-threonine + 2-oxoglutarate = (R)-3-hydroxy-2-oxo-4-phosphooxybutanoate + L-glutamate. The protein operates within amino-acid biosynthesis; L-serine biosynthesis; L-serine from 3-phospho-D-glycerate: step 2/3. Its pathway is cofactor biosynthesis; pyridoxine 5'-phosphate biosynthesis; pyridoxine 5'-phosphate from D-erythrose 4-phosphate: step 3/5. Catalyzes the reversible conversion of 3-phosphohydroxypyruvate to phosphoserine and of 3-hydroxy-2-oxo-4-phosphonooxybutanoate to phosphohydroxythreonine. This is Phosphoserine aminotransferase from Shewanella sp. (strain MR-4).